The sequence spans 106 residues: Large ribosomal subunit protein uL23 (106 aa).

The protein belongs to the universal ribosomal protein uL23 family. As to quaternary structure, part of the 50S ribosomal subunit. Contacts protein L29, and trigger factor when it is bound to the ribosome.

One of the early assembly proteins it binds 23S rRNA. One of the proteins that surrounds the polypeptide exit tunnel on the outside of the ribosome. Forms the main docking site for trigger factor binding to the ribosome. This chain is Large ribosomal subunit protein uL23, found in Neisseria gonorrhoeae (strain ATCC 700825 / FA 1090).